The primary structure comprises 540 residues: Chaperonin GroEL (540 aa).

ATP-binding positions include 29 to 32 (TIGP), 86 to 90 (DGTTT), glycine 413, 477 to 479 (NAA), and aspartate 493.

It belongs to the chaperonin (HSP60) family. Forms a cylinder of 14 subunits composed of two heptameric rings stacked back-to-back. Interacts with the co-chaperonin GroES.

The protein resides in the cytoplasm. It carries out the reaction ATP + H2O + a folded polypeptide = ADP + phosphate + an unfolded polypeptide.. Together with its co-chaperonin GroES, plays an essential role in assisting protein folding. The GroEL-GroES system forms a nano-cage that allows encapsulation of the non-native substrate proteins and provides a physical environment optimized to promote and accelerate protein folding. This Lactobacillus helveticus (strain DPC 4571) protein is Chaperonin GroEL.